We begin with the raw amino-acid sequence, 75 residues long: Dermaseptin-S11 (75 aa).

A signal peptide spans 1 to 22; sequence MAFLKKSLFLVLFLGMVSLSIC. The propeptide occupies 23 to 45; the sequence is EEEKRENEDEEEQEDDEQSEEKR. Positions 25-44 are disordered; it reads EKRENEDEEEQEDDEQSEEK. Over residues 30–41 the composition is skewed to acidic residues; that stretch reads EDEEEQEDDEQS.

This sequence belongs to the frog skin active peptide (FSAP) family. Dermaseptin subfamily. As to expression, expressed by the skin glands.

The protein resides in the secreted. It is found in the target cell membrane. Its function is as follows. Antimicrobial peptide with activity against Gram-positive and Gram-negative bacteria, and fungi. Has hemolytic activity. The polypeptide is Dermaseptin-S11 (Phyllomedusa sauvagei (Sauvage's leaf frog)).